Consider the following 328-residue polypeptide: tRNA N6-adenosine threonylcarbamoyltransferase (328 aa).

Residues His111 and His115 each contribute to the Fe cation site. Residues Leu133–Gly137, Asp166, Gly179, Asp183, and Asn270 contribute to the substrate site. Asp296 is a Fe cation binding site.

This sequence belongs to the KAE1 / TsaD family. Requires Fe(2+) as cofactor.

It localises to the cytoplasm. The catalysed reaction is L-threonylcarbamoyladenylate + adenosine(37) in tRNA = N(6)-L-threonylcarbamoyladenosine(37) in tRNA + AMP + H(+). Its function is as follows. Required for the formation of a threonylcarbamoyl group on adenosine at position 37 (t(6)A37) in tRNAs that read codons beginning with adenine. Is involved in the transfer of the threonylcarbamoyl moiety of threonylcarbamoyl-AMP (TC-AMP) to the N6 group of A37, together with TsaE and TsaB. TsaD likely plays a direct catalytic role in this reaction. The chain is tRNA N6-adenosine threonylcarbamoyltransferase from Phytoplasma australiense.